A 547-amino-acid chain; its full sequence is Probable protein kinase UbiB (547 aa).

Residues 121–501 (EFSPDPMASA…QLRSERRWRR (381 aa)) enclose the Protein kinase domain. ATP-binding positions include 127–135 (MASASVAQV) and K149. D284 acts as the Proton acceptor in catalysis. Transmembrane regions (helical) follow at residues 502–522 (GFIALVLAGAALVGSQPHAGQ) and 523–543 (WLADLPVWSWALLAGAAGVML).

This sequence belongs to the ABC1 family. UbiB subfamily.

The protein resides in the cell inner membrane. It participates in cofactor biosynthesis; ubiquinone biosynthesis [regulation]. Is probably a protein kinase regulator of UbiI activity which is involved in aerobic coenzyme Q (ubiquinone) biosynthesis. The chain is Probable protein kinase UbiB from Marinobacter nauticus (strain ATCC 700491 / DSM 11845 / VT8) (Marinobacter aquaeolei).